The following is a 93-amino-acid chain: Putative septation protein SpoVG (93 aa).

It belongs to the SpoVG family.

Functionally, could be involved in septation. This is Putative septation protein SpoVG from Fusobacterium nucleatum subsp. nucleatum (strain ATCC 25586 / DSM 15643 / BCRC 10681 / CIP 101130 / JCM 8532 / KCTC 2640 / LMG 13131 / VPI 4355).